The primary structure comprises 204 residues: Thymidylate kinase (204 aa).

Residue 10 to 17 (GGDGAGKT) participates in ATP binding.

Belongs to the thymidylate kinase family.

The catalysed reaction is dTMP + ATP = dTDP + ADP. Phosphorylation of dTMP to form dTDP in both de novo and salvage pathways of dTTP synthesis. The sequence is that of Thymidylate kinase from Cutibacterium acnes (strain DSM 16379 / KPA171202) (Propionibacterium acnes).